The sequence spans 497 residues: Latent membrane protein 2 (497 aa).

The interval 1–108 is disordered; it reads MGSLEMVPMG…PPYSPRDDSS (108 aa). At 1-123 the chain is on the cytoplasmic side; that stretch reads MGSLEMVPMG…EAGRGSMNPV (123 aa). Residues 27–41 are compositionally biased toward polar residues; that stretch reads NNSQYPSASGSSGNT. The PPxY motif motif lies at 97 to 101; sequence PPPPY. Y112 bears the Phosphotyrosine; by host mark. Residues 124–144 form a helical membrane-spanning segment; sequence CLPVIVAPYLFWLAAIAASCF. The Extracellular segment spans residues 145–147; sequence TAS. The helical transmembrane segment at 148-168 threads the bilayer; the sequence is VSTVVTATGLALSLLLLAAVA. The Cytoplasmic segment spans residues 169-177; that stretch reads SSYAAAQRK. Residues 178–198 traverse the membrane as a helical segment; it reads LLTPVTVLTAVVTFFAICLTW. Residues 199 to 211 are Extracellular-facing; that stretch reads RIEDPPFNSLLFA. A helical transmembrane segment spans residues 212 to 232; that stretch reads LLAAAGGLQGIYVLVMLVLLI. Over 233–241 the chain is Cytoplasmic; sequence LAYRRRWRR. Residues 242–262 traverse the membrane as a helical segment; that stretch reads LTVCGGIMFLACVLVLIVDAV. At 263–267 the chain is on the extracellular side; that stretch reads LQLSP. The helical transmembrane segment at 268–288 threads the bilayer; the sequence is LLGAVTVVSMTLLLLAFVLWL. Residues 289 to 296 are Cytoplasmic-facing; that stretch reads SSPGGLGT. Residues 297–317 traverse the membrane as a helical segment; sequence LGAALLTLAAALALLASLILG. T318 is a topological domain (extracellular). The helical transmembrane segment at 319–339 threads the bilayer; the sequence is LNLTTMFLLMLLWTLVVLLIC. The Cytoplasmic segment spans residues 340-354; the sequence is SSCSSCPLSKILLAR. The helical transmembrane segment at 355 to 375 threads the bilayer; sequence LFLYALALLLLASALIAGGSI. Residues 376–388 lie on the Extracellular side of the membrane; it reads LQTNFKSLSSTEF. Residues 389–409 traverse the membrane as a helical segment; it reads IPNLFCMLLLIVAGILFILAI. The Cytoplasmic segment spans residues 410–422; sequence LTEWGSGNRTYGP. Residues 423-443 traverse the membrane as a helical segment; sequence VFMCLGGLLTMVAGAVWLTVM. The Extracellular portion of the chain corresponds to 444-449; the sequence is TNTLLS. The helical transmembrane segment at 450-470 threads the bilayer; the sequence is AWILTAGFLIFLIGFALFGVI. The Cytoplasmic portion of the chain corresponds to 471 to 497; it reads RCCRYCCYYCLTLESEERPPTPYRNTV.

Belongs to the herpesviridae LMP-2 family. As to quaternary structure, the cytoplasmic N-terminal domain interacts with human SRC family protein tyrosine kinases SYK and LYN. Binds human ITCH, WWP2 and NEDD4L. In terms of processing, phosphorylated on cytoplasmic N-terminal tyrosine residues, possibly by human LYN. Post-translationally, can be ubiquitinated by human ITCH and WWP2 on the N-terminus in a lysine-independent manner.

It localises to the host cell membrane. The protein resides in the host endomembrane system. Its subcellular location is the host cytoplasm. The protein localises to the host perinuclear region. Functionally, maintains EBV latent infection of B-lymphocyte, by preventing lytic reactivation of the virus in response to surface immunoglobulin (sIg) cross-linking. Acts like a dominant negative inhibitor of the sIg-associated protein tyrosine kinases, LYN and SYK. Also blocks translocation of the B-cell antigen receptor (BCR) into lipid rafts, preventing the subsequent signaling and accelerated internalization of the BCR upon BCR cross-linking. Serves as a molecular scaffold to recruit SYK, LYN and E3 protein-ubiquitin ligases, such as ITCH and NEDD4L, leading to ubiquitination and potential degradation of both tyrosines kinases. Possesses a constitutive signaling activity in non-transformed cells, inducing bypass of normal B lymphocyte developmental checkpoints allowing immunoglobulin-negative cells to colonize peripheral lymphoid organs. May be a negative regulator of isoform LMP2A. This Homo sapiens (Human) protein is Latent membrane protein 2 (LMP2).